The primary structure comprises 371 residues: N-acetyldiaminopimelate deacetylase (371 aa).

D68 is an active-site residue. The active-site Proton acceptor is E127.

The protein belongs to the peptidase M20A family. N-acetyldiaminopimelate deacetylase subfamily.

It catalyses the reaction N-acetyl-(2S,6S)-2,6-diaminopimelate + H2O = (2S,6S)-2,6-diaminopimelate + acetate. Its pathway is amino-acid biosynthesis; L-lysine biosynthesis via DAP pathway; LL-2,6-diaminopimelate from (S)-tetrahydrodipicolinate (acetylase route): step 3/3. Catalyzes the conversion of N-acetyl-diaminopimelate to diaminopimelate and acetate. This Listeria monocytogenes serovar 1/2a (strain ATCC BAA-679 / EGD-e) protein is N-acetyldiaminopimelate deacetylase.